We begin with the raw amino-acid sequence, 297 residues long: Phosphoprotein (297 aa).

The Nuclear export signal motif lies at 49–58 (LPEDMKRLHL). Phosphoserine; by host is present on residues S63 and S64. The interval 132 to 177 (NFPNPPRRSSEDKSTQTTGRELKKETTSAFSQRESQPSKARMVAQV) is disordered. Positions 138-172 (RRSSEDKSTQTTGRELKKETTSAFSQRESQPSKAR) are DYNLL1 and DYNLL2 binding. Positions 139 to 157 (RSSEDKSTQTTGRELKKET) are enriched in basic and acidic residues. Over residues 158-169 (TSAFSQRESQPS) the composition is skewed to polar residues. Phosphoserine; by host PKC occurs at positions 162 and 210. The Nuclear localization signal signature appears at 211–214 (KKYK). S271 is modified (phosphoserine; by host PKC).

Belongs to the lyssavirus protein P family. As to quaternary structure, homotrimer when phosphorylated. This trimer is stabilized by binding to the L protein. Binds soluble protein N, and ribonucleocapsid. Interacts with host DYNLL1 and DYNLL2; this interaction may play a role in intracellular microtubule-dependent virus transport of incoming virus. Interacts with host STAT1, STAT2 and PML. Interacts with host TBK1. Binds host PML. In terms of processing, phosphorylated by host PKC and by an unknown kinase.

The protein localises to the virion. It is found in the host cytoplasm. It localises to the host nucleus. Functionally, non catalytic polymerase cofactor and regulatory protein that plays a role in viral transcription and replication. Stabilizes the RNA polymerase L to the N-RNA template and binds the soluble protein N, preventing it from encapsidating non-genomic RNA. Also inhibits host IFN-alpha and IFN-beta signaling by binding and retaining phosphorylated STAT1 in the cytoplasm or by inhibiting the DNA binding of STAT1 in the nucleus. Might be involved, through interaction with host dynein, in intracellular microtubule-dependent virus transport of incoming virus from the synapse toward the cell body. Inhibits interferon induction pathways by interacting with host TBK1 and preventing the formation of dynamic cytoplasmic condensates that have liquid properties and that are essential for interferon production. In Rabies virus (strain CVS-11) (RABV), this protein is Phosphoprotein (P).